The following is an 839-amino-acid chain: LPS-assembly protein LptD (839 aa).

The first 21 residues, 1-21, serve as a signal peptide directing secretion; sequence MAIGITACVLSLINYQGLAYS.

It belongs to the LptD family. As to quaternary structure, component of the lipopolysaccharide transport and assembly complex. Interacts with LptE and LptA.

The protein localises to the cell outer membrane. Its function is as follows. Together with LptE, is involved in the assembly of lipopolysaccharide (LPS) at the surface of the outer membrane. This chain is LPS-assembly protein LptD, found in Legionella pneumophila (strain Lens).